We begin with the raw amino-acid sequence, 211 residues long: Thiamine-phosphate synthase (211 aa).

4-amino-2-methyl-5-(diphosphooxymethyl)pyrimidine contacts are provided by residues 39-41 (QLR) and asparagine 71. Residues aspartate 72 and aspartate 91 each coordinate Mg(2+). Serine 110 contributes to the 4-amino-2-methyl-5-(diphosphooxymethyl)pyrimidine binding site. 136–138 (TGT) provides a ligand contact to 2-[(2R,5Z)-2-carboxy-4-methylthiazol-5(2H)-ylidene]ethyl phosphate. Residue lysine 139 coordinates 4-amino-2-methyl-5-(diphosphooxymethyl)pyrimidine. 2-[(2R,5Z)-2-carboxy-4-methylthiazol-5(2H)-ylidene]ethyl phosphate contacts are provided by residues glycine 167 and 187-188 (VS).

It belongs to the thiamine-phosphate synthase family. Requires Mg(2+) as cofactor.

It carries out the reaction 2-[(2R,5Z)-2-carboxy-4-methylthiazol-5(2H)-ylidene]ethyl phosphate + 4-amino-2-methyl-5-(diphosphooxymethyl)pyrimidine + 2 H(+) = thiamine phosphate + CO2 + diphosphate. It catalyses the reaction 2-(2-carboxy-4-methylthiazol-5-yl)ethyl phosphate + 4-amino-2-methyl-5-(diphosphooxymethyl)pyrimidine + 2 H(+) = thiamine phosphate + CO2 + diphosphate. The enzyme catalyses 4-methyl-5-(2-phosphooxyethyl)-thiazole + 4-amino-2-methyl-5-(diphosphooxymethyl)pyrimidine + H(+) = thiamine phosphate + diphosphate. Its pathway is cofactor biosynthesis; thiamine diphosphate biosynthesis; thiamine phosphate from 4-amino-2-methyl-5-diphosphomethylpyrimidine and 4-methyl-5-(2-phosphoethyl)-thiazole: step 1/1. Functionally, condenses 4-methyl-5-(beta-hydroxyethyl)thiazole monophosphate (THZ-P) and 2-methyl-4-amino-5-hydroxymethyl pyrimidine pyrophosphate (HMP-PP) to form thiamine monophosphate (TMP). In Xanthobacter autotrophicus (strain ATCC BAA-1158 / Py2), this protein is Thiamine-phosphate synthase.